Consider the following 527-residue polypeptide: Zinc finger protein 35 (527 aa).

The tract at residues 9-221 (MALAPWGPVK…NPKTQLGQKP (213 aa)) is globular domain. The disordered stretch occupies residues 16-38 (PVKVKKEEEEEENFPGQASSQQV). Residues lysine 20, lysine 21, lysine 99, lysine 117, lysine 125, lysine 144, lysine 158, lysine 189, and lysine 214 each participate in a glycyl lysine isopeptide (Lys-Gly) (interchain with G-Cter in SUMO2) cross-link. 2 consecutive C2H2-type zinc fingers follow at residues 222-244 (FTCSVCGKGFSQSANLVVHQRIH) and 250-272 (FECHECGKAFIQSANLVVHQRIH). Lysine 276 participates in a covalent cross-link: Glycyl lysine isopeptide (Lys-Gly) (interchain with G-Cter in SUMO2). 9 C2H2-type zinc fingers span residues 278-300 (YVCSKCGKAFTQSSNLTVHQKIH), 306-328 (FKCNECEKAFSYSSQLARHQKVH), 334-356 (YECNECGKTFTRSSNLIVHQRIH), 362-384 (FACNDCGKAFTQSANLIVHQRSH), 390-412 (YECKECGKAFSCFSHLIVHQRIH), 418-440 (YDCSECGKAFSQLSCLIVHQRIH), 446-468 (YVCNECGKAFTCSSYLLIHQRIH), 474-496 (YTCNECGKAFRQRSSLTVHQRTH), and 502-524 (YECEKCGAAFISNSHLMRHHRTH).

This sequence belongs to the krueppel C2H2-type zinc-finger protein family.

It is found in the nucleus. Functionally, may be involved in transcriptional regulation. Involved in cell differentiation and/or proliferation. The chain is Zinc finger protein 35 (ZNF35) from Homo sapiens (Human).